The chain runs to 768 residues: Solabiose phosphorylase (768 aa).

Asp-456 acts as the Proton donor in catalysis.

The protein belongs to the glycosyl hydrolase 94 family.

The enzyme catalyses solabiose + phosphate = D-galactose + alpha-D-glucose 1-phosphate. In terms of biological role, catalyzes the reversible phosphorolysis of solabiose. Catalyzes the phosphorolysis and synthesis of solabiose through a sequential bi-bi mechanism involving the formation of a ternary complex. Is probably involved in the metabolism of solabiose released from solabiose-containing compounds. The chain is Solabiose phosphorylase from Paenibacillus borealis.